The chain runs to 292 residues: UDP-3-O-acyl-N-acetylglucosamine deacetylase (292 aa).

Zn(2+)-binding residues include histidine 76, histidine 232, and aspartate 236. The active-site Proton donor is the histidine 259.

This sequence belongs to the LpxC family. Requires Zn(2+) as cofactor.

The catalysed reaction is a UDP-3-O-[(3R)-3-hydroxyacyl]-N-acetyl-alpha-D-glucosamine + H2O = a UDP-3-O-[(3R)-3-hydroxyacyl]-alpha-D-glucosamine + acetate. It functions in the pathway glycolipid biosynthesis; lipid IV(A) biosynthesis; lipid IV(A) from (3R)-3-hydroxytetradecanoyl-[acyl-carrier-protein] and UDP-N-acetyl-alpha-D-glucosamine: step 2/6. Functionally, catalyzes the hydrolysis of UDP-3-O-myristoyl-N-acetylglucosamine to form UDP-3-O-myristoylglucosamine and acetate, the committed step in lipid A biosynthesis. The polypeptide is UDP-3-O-acyl-N-acetylglucosamine deacetylase (Thermodesulfovibrio yellowstonii (strain ATCC 51303 / DSM 11347 / YP87)).